Reading from the N-terminus, the 202-residue chain is LexA repressor (202 aa).

Residues 28-48 constitute a DNA-binding region (H-T-H motif); the sequence is RAEIAQRLGFRSPNAAEEHLK. Residues serine 119 and lysine 156 each act as for autocatalytic cleavage activity in the active site.

This sequence belongs to the peptidase S24 family. As to quaternary structure, homodimer.

It carries out the reaction Hydrolysis of Ala-|-Gly bond in repressor LexA.. Represses a number of genes involved in the response to DNA damage (SOS response), including recA and lexA. Binds to the 16 bp palindromic sequence 5'-CTGTATATATATACAG-3'. In the presence of single-stranded DNA, RecA interacts with LexA causing an autocatalytic cleavage which disrupts the DNA-binding part of LexA, leading to derepression of the SOS regulon and eventually DNA repair. This chain is LexA repressor, found in Cronobacter sakazakii (strain ATCC BAA-894) (Enterobacter sakazakii).